The sequence spans 725 residues: Heme/hemopexin utilization protein C (725 aa).

The first 21 residues, 1-21 (MRFSKLSLAIATTLVTANALA), serve as a signal peptide directing secretion. Residues 36 to 147 (DPSRFAYTPE…LGGVVAMRTP (112 aa)) form the TBDR plug domain. The 568-residue stretch at 158–725 (KFGVKIRQGY…NAKISAVYSF (568 aa)) folds into the TBDR beta-barrel domain. The short motif at 708–725 (SLMEGTGRNAKISAVYSF) is the TonB C-terminal box element.

This sequence belongs to the TonB-dependent receptor family.

The protein localises to the cell outer membrane. In terms of biological role, required for utilization of free heme at low concentrations. The polypeptide is Heme/hemopexin utilization protein C (hxuC) (Haemophilus influenzae).